We begin with the raw amino-acid sequence, 453 residues long: Gastrin/cholecystokinin type B receptor (453 aa).

Topologically, residues 1–57 (MELLKLNRSAQGSGAGPGASLCRAGGALLNSSGAGNLSCEPPRLRGAGTRELELAIR) are extracellular. 3 N-linked (GlcNAc...) asparagine glycosylation sites follow: N7, N30, and N36. A helical membrane pass occupies residues 58–79 (VTLYAVIFLMSVGGNVLIIVVL). Residues 80 to 87 (GLSRRLRT) are Cytoplasmic-facing. A helical membrane pass occupies residues 88-109 (VTNAFLLSLAVSDLLLAVACMP). Over 110 to 131 (FTLLPNLMGTFIFGTVVCKAVS) the chain is Extracellular. An intrachain disulfide couples C127 to C206. A helical membrane pass occupies residues 132 to 150 (YLMGVSVSVSTLSLVAIAL). Topologically, residues 151-170 (ERYSAICRPLQARVWQTRSH) are cytoplasmic. Residues 171–189 (AARVIIATWMLSGLLMVPY) form a helical membrane-spanning segment. Topologically, residues 190-220 (PVYTAVQPAGGARALQCVHRWPSARVRQTWS) are extracellular. A helical transmembrane segment spans residues 221–243 (VLLLLLLFFVPGVVMAVAYGLIS). Over 244–339 (RELYLGLRFD…KLLAKKRVVR (96 aa)) the chain is Cytoplasmic. The disordered stretch occupies residues 258–286 (SESRVRSQGGLRGGAGPGPAPPNGSCRPE). Residues 340–361 (MLLVIVVLFFLCWLPLYSANTW) traverse the membrane as a helical segment. Over 362–379 (RAFDSSGAHRALSGAPIS) the chain is Extracellular. Residues 380–400 (FIHLLSYASACVNPLVYCFMH) form a helical membrane-spanning segment. Over 401-453 (RRFRQACLETCARCCPRPPRARPRPLPDEDPPTPSIASLSRLSYTTISTLGPG) the chain is Cytoplasmic. The S-palmitoyl cysteine moiety is linked to residue C414. Residues 422 to 453 (RPRPLPDEDPPTPSIASLSRLSYTTISTLGPG) are disordered. The span at 435–453 (SIASLSRLSYTTISTLGPG) shows a compositional bias: polar residues.

Belongs to the G-protein coupled receptor 1 family. In terms of tissue distribution, parietal cells, pancreas, brain and various neoplastic tissues.

It localises to the cell membrane. Receptor for gastrin and cholecystokinin. The CCK-B receptors occur throughout the central nervous system where they modulate anxiety, analgesia, arousal, and neuroleptic activity. This receptor mediates its action by association with G proteins that activate a phosphatidylinositol-calcium second messenger system. This Canis lupus familiaris (Dog) protein is Gastrin/cholecystokinin type B receptor (CCKBR).